We begin with the raw amino-acid sequence, 135 residues long: uncharacterized protein (135 aa).

A disordered region spans residues 100–125 (KESPATSSEDISSCSDCDSERLQSDD). A compositionally biased stretch (low complexity) spans 106–115 (SSEDISSCSD).

This is an uncharacterized protein from Microplitis demolitor (Parasitoid wasp).